The primary structure comprises 1088 residues: MNKLRDKFVDSTVEEERLRENRNHEKYWYRWGPYLSERSWATVREDYSLNGDAWSNFPFEHANARVFRWGEDGLFGVSDNKQLVCMNVALWNGKDERLKERLFGLTGPQGNHGEDVKELYFYLDNTPTHSYMKALYKYPFKKAFPYKELVQKNGERGYEDKEFEVYDIDGLYRDSETGDNPYFDVFFEMAKDDENPSELNFRLTIHNRSKIDSGELYIAPQLFFRNTWAFDGTRTKDKPLLERDAEAANLINMTHKKYGNCQMVFQPSPGGFSSGTNEEEEDKEVEDIDPLLLFTDNESNLVKLFNEEKNPSEYTKDAFEEYLVQGKTDAVNPENKGTKACAVYHFKNIPPGEYVTVRYKFTNDPKNSIFKAQNLAVVDEDEFDLIFDNREEEADNFYWRITPLPISDELRNLQRQAFSGLLWTKQFYNFTYDAWYNGDANVKPRPPPNRANGRNKNWKHLYIEDILSMPDKWEYPFFASWDTAFHCIPLAMIDPEFAKRQLDLLTREWYMHPNGQIPAYEWNFNDVNPPVHAWAVYRVFKIERNMYNREDRTFLERVFQKLLLNFTWWVNRKDTEGKNVFEGGFLGLDNIGVFNRSEPLPTGGTLEQADSTGWMAFFSLQMLNIALELAKENPVYEDIASKFFEHFILISDSMSFEYATDITGEKCKEVIKQNLWNEADKFYYDAISWGDHKVQLPIRSLVGLIPLYASMTLEPSIIKQFRGFKKRVDWFVNNRPEIFDRNIASMSKKGVGERLLLSLVTKERLTAILSRLLDETEFLSPYGIRSLSKYHEKHPFEMNVNGVEYMVKYLPGESDSGMFGGNSNWRGPIWFPTSFLIMEALQRFYLYYGSDFKVECPVGSGDYLNLAEVAEELGYRMIHLFVPDENGERAIHYGDHSKFLSSDPYFRDYVPFFEYFDGDTGRGLGASHQCGWTALVAKWISDVGISCVRLPRTPRSSVATTASTESSEQGPKMKRMARRKSAKSLVNYTATILDLTEEEKRHHRIGGTHSGLTPQSSISSDKARHLMEEMNEEEGIHETVVPEDRHNFETKLIGKLKDKVKNMKVTDKAKDEDIDPMDPMSPLNKDVS.

At serine 299 the chain carries Phosphoserine. The disordered stretch occupies residues 954-980 (PRSSVATTASTESSEQGPKMKRMARRK). The span at 956–968 (SSVATTASTESSE) shows a compositional bias: low complexity. A Phosphoserine modification is found at serine 984. Threonine 1013 bears the Phosphothreonine mark. The disordered stretch occupies residues 1063-1088 (MKVTDKAKDEDIDPMDPMSPLNKDVS). The residue at position 1081 (serine 1081) is a Phosphoserine.

This is an uncharacterized protein from Saccharomyces cerevisiae (strain ATCC 204508 / S288c) (Baker's yeast).